Here is a 321-residue protein sequence, read N- to C-terminus: Nod factor export ATP-binding protein I (321 aa).

The 231-residue stretch at 17-247 (LSVEGLRKRY…EIGCDVVEVY (231 aa)) folds into the ABC transporter domain. ATP is bound at residue 49–56 (GPNGAGKT).

It belongs to the ABC transporter superfamily. Lipooligosaccharide exporter (TC 3.A.1.102) family. The complex is composed of two ATP-binding proteins (NodI) and two transmembrane proteins (NodJ).

It is found in the cell inner membrane. Functionally, part of the ABC transporter complex NodIJ involved in the export of the nodulation factors (Nod factors), the bacterial signal molecules that induce symbiosis and subsequent nodulation induction. Nod factors are LCO (lipo-chitin oligosaccharide), a modified beta-1,4-linked N-acetylglucosamine oligosaccharide. This subunit is responsible for energy coupling to the transport system. The sequence is that of Nod factor export ATP-binding protein I from Ralstonia nicotianae (strain ATCC BAA-1114 / GMI1000) (Ralstonia solanacearum).